Reading from the N-terminus, the 274-residue chain is Orotidine 5'-phosphate decarboxylase (274 aa).

Substrate is bound by residues Asp40, 62-64, 93-102, Tyr227, and Arg245; these read KTH and DRKFVDIGNT. Lys95 acts as the Proton donor in catalysis.

This sequence belongs to the OMP decarboxylase family.

It carries out the reaction orotidine 5'-phosphate + H(+) = UMP + CO2. Its pathway is pyrimidine metabolism; UMP biosynthesis via de novo pathway; UMP from orotate: step 2/2. This chain is Orotidine 5'-phosphate decarboxylase (URA3), found in Coccidioides immitis (strain RS) (Valley fever fungus).